The chain runs to 47 residues: Large ribosomal subunit protein bL34 (47 aa).

Positions 1–47 are disordered; that stretch reads MVTEGLKPHISIKKKKRKSGFLARMRTKSGRKIIARRRRKGRKRLAP. Basic residues predominate over residues 10 to 47; sequence ISIKKKKRKSGFLARMRTKSGRKIIARRRRKGRKRLAP.

Belongs to the bacterial ribosomal protein bL34 family.

The polypeptide is Large ribosomal subunit protein bL34 (rpmH) (Aquifex aeolicus (strain VF5)).